The primary structure comprises 227 residues: Urease subunit gamma/beta (227 aa).

Residues 1–101 are urease gamma; sequence MRLTPTERDR…LAVVTDPIGG (101 aa). The tract at residues 102–227 is urease beta; sequence GLGDQAPGAL…ACGYLGVEQR (126 aa).

It in the N-terminal section; belongs to the urease gamma subunit family. In the C-terminal section; belongs to the urease beta subunit family. Heterohexamer of 3 UreC (alpha) and 3 UreAB (gamma/beta) subunits.

The protein resides in the cytoplasm. It catalyses the reaction urea + 2 H2O + H(+) = hydrogencarbonate + 2 NH4(+). It functions in the pathway nitrogen metabolism; urea degradation; CO(2) and NH(3) from urea (urease route): step 1/1. The polypeptide is Urease subunit gamma/beta (Streptomyces avermitilis (strain ATCC 31267 / DSM 46492 / JCM 5070 / NBRC 14893 / NCIMB 12804 / NRRL 8165 / MA-4680)).